The sequence spans 242 residues: ATP-dependent dethiobiotin synthetase BioD (242 aa).

12-17 contributes to the ATP binding site; it reads EVGKTV. Mg(2+) is bound at residue Thr-16. Lys-37 is a catalytic residue. Ser-41 lines the substrate pocket. ATP contacts are provided by residues Asp-51 and 112–115; that span reads EGAG. Asp-51 and Glu-112 together coordinate Mg(2+).

The protein belongs to the dethiobiotin synthetase family. Homodimer. The cofactor is Mg(2+).

It localises to the cytoplasm. It carries out the reaction (7R,8S)-7,8-diammoniononanoate + CO2 + ATP = (4R,5S)-dethiobiotin + ADP + phosphate + 3 H(+). It functions in the pathway cofactor biosynthesis; biotin biosynthesis; biotin from 7,8-diaminononanoate: step 1/2. In terms of biological role, catalyzes a mechanistically unusual reaction, the ATP-dependent insertion of CO2 between the N7 and N8 nitrogen atoms of 7,8-diaminopelargonic acid (DAPA, also called 7,8-diammoniononanoate) to form a ureido ring. The polypeptide is ATP-dependent dethiobiotin synthetase BioD (Bacillus cereus (strain G9842)).